The sequence spans 429 residues: Glutamate-1-semialdehyde 2,1-aminomutase (429 aa).

An N6-(pyridoxal phosphate)lysine modification is found at Lys-265.

It belongs to the class-III pyridoxal-phosphate-dependent aminotransferase family. HemL subfamily. As to quaternary structure, homodimer. The cofactor is pyridoxal 5'-phosphate.

The protein resides in the cytoplasm. The enzyme catalyses (S)-4-amino-5-oxopentanoate = 5-aminolevulinate. It participates in porphyrin-containing compound metabolism; protoporphyrin-IX biosynthesis; 5-aminolevulinate from L-glutamyl-tRNA(Glu): step 2/2. This Shewanella piezotolerans (strain WP3 / JCM 13877) protein is Glutamate-1-semialdehyde 2,1-aminomutase.